A 283-amino-acid chain; its full sequence is 4-diphosphocytidyl-2-C-methyl-D-erythritol kinase (283 aa).

The active site involves Lys13. ATP is bound at residue 96 to 106; it reads PMGGGIGGGSS. Residue Asp138 is part of the active site.

The protein belongs to the GHMP kinase family. IspE subfamily.

The enzyme catalyses 4-CDP-2-C-methyl-D-erythritol + ATP = 4-CDP-2-C-methyl-D-erythritol 2-phosphate + ADP + H(+). The protein operates within isoprenoid biosynthesis; isopentenyl diphosphate biosynthesis via DXP pathway; isopentenyl diphosphate from 1-deoxy-D-xylulose 5-phosphate: step 3/6. In terms of biological role, catalyzes the phosphorylation of the position 2 hydroxy group of 4-diphosphocytidyl-2C-methyl-D-erythritol. In Pseudomonas fluorescens (strain Pf0-1), this protein is 4-diphosphocytidyl-2-C-methyl-D-erythritol kinase.